Consider the following 326-residue polypeptide: Beta-ketoacyl-[acyl-carrier-protein] synthase III (326 aa).

Active-site residues include Cys112 and His251. The interval 252-256 (QANSR) is ACP-binding. Asn281 is an active-site residue.

It belongs to the thiolase-like superfamily. FabH family. As to quaternary structure, homodimer.

It is found in the cytoplasm. It carries out the reaction malonyl-[ACP] + acetyl-CoA + H(+) = 3-oxobutanoyl-[ACP] + CO2 + CoA. The protein operates within lipid metabolism; fatty acid biosynthesis. Catalyzes the condensation reaction of fatty acid synthesis by the addition to an acyl acceptor of two carbons from malonyl-ACP. Catalyzes the first condensation reaction which initiates fatty acid synthesis and may therefore play a role in governing the total rate of fatty acid production. Possesses both acetoacetyl-ACP synthase and acetyl transacylase activities. Its substrate specificity determines the biosynthesis of branched-chain and/or straight-chain of fatty acids. The protein is Beta-ketoacyl-[acyl-carrier-protein] synthase III of Clostridium botulinum (strain Loch Maree / Type A3).